The primary structure comprises 505 residues: Glutamate--tRNA ligase (505 aa).

A 'HIGH' region motif is present at residues 12–22; it reads PSPTGDPHVGT. The 'KMSKS' region motif lies at 253 to 257; the sequence is KLSKR. Lys256 serves as a coordination point for ATP.

This sequence belongs to the class-I aminoacyl-tRNA synthetase family. Glutamate--tRNA ligase type 1 subfamily. In terms of assembly, monomer.

The protein localises to the cytoplasm. The catalysed reaction is tRNA(Glu) + L-glutamate + ATP = L-glutamyl-tRNA(Glu) + AMP + diphosphate. Catalyzes the attachment of glutamate to tRNA(Glu) in a two-step reaction: glutamate is first activated by ATP to form Glu-AMP and then transferred to the acceptor end of tRNA(Glu). The sequence is that of Glutamate--tRNA ligase from Chlamydia abortus (strain DSM 27085 / S26/3) (Chlamydophila abortus).